The following is a 275-amino-acid chain: MASLQTQMISFYLIFLSILLTTIFFFKVNSTETTSFSITKFSPDQKNLIFQGDGYTTKGKLTLTKAVKSTVGRALYSTPIHIWDRDTGNVANFVTSFTFVIDAPSSYNVADGFTFFIAPVDTKPQTGGGYLGVFNSKEYDKTSQTVAVEFDTFYNAAWDPSNKERHIGIDVNSIKSVNTKSWNLQNGERANVVIAFNAATNVLTVTLTYPNSLEEENVTSYTLNEVVPLKDVVPEWVRIGFSATTGAEFAAHEVHSWSFHSELGGTSSSKQAADA.

An N-terminal signal peptide occupies residues 1–30; it reads MASLQTQMISFYLIFLSILLTTIFFFKVNS. D-glucose-binding residues include Asp111 and Gly129. Residues Glu149 and Asp151 each contribute to the Mn(2+) site. The Ca(2+) site is built by Asp151, Phe153, Asn155, and Asp159. Positions 159 and 166 each coordinate Mn(2+). Residues 211–217 constitute a propeptide that is removed on maturation; it reads NSLEEEN. Residues Gly246 and Ala247 each contribute to the D-glucose site. A propeptide spanning residues 270–275 is cleaved from the precursor; the sequence is KQAADA.

The protein belongs to the leguminous lectin family. In terms of assembly, heterotetramer of two alpha and two beta chains. The mature form consists of two chains, alpha and beta, produced by cleavage of the immature protein. These remain cleaved, yet fold together to form one subunit.

Its function is as follows. D-mannose specific lectin. The sequence is that of Lectin from Lens culinaris subsp. culinaris (Cultivated lentil).